The following is a 2121-amino-acid chain: Non-reducing polyketide synthase aoiG (2121 aa).

One can recognise a Starter acyltransferase (SAT) domain in the interval 5-258 (YIFGDQTVRV…LPVSIYAPYH (254 aa)). The 432-residue stretch at 386–817 (SSKIAIIGFS…GGNTAVLVED (432 aa)) folds into the Ketosynthase family 3 (KS3) domain. Catalysis depends on for beta-ketoacyl synthase activity residues Cys-558, His-693, and His-735. The Malonyl-CoA:ACP transacylase (MAT) domain occupies 921–1239 (FLFTGQGAQQ…LSVLHLAGVR (319 aa)). The tract at residues 1302–1433 (QKILEEEMTA…CTIELQRPHQ (132 aa)) is N-terminal hotdog fold. A PKS/mFAS DH domain is found at 1302–1608 (QKILEEEMTA…FQKVARRVLE (307 aa)). Residue His-1334 is the Proton acceptor; for dehydratase activity of the active site. The C-terminal hotdog fold stretch occupies residues 1461-1608 (THKMRRGVAY…FQKVARRVLE (148 aa)). Asp-1519 serves as the catalytic Proton donor; for dehydratase activity. The 78-residue stretch at 1646 to 1723 (PHVEDAWQQV…SLRIYLNMSS (78 aa)) folds into the Carrier 1 domain. Residue Ser-1683 is modified to O-(pantetheine 4'-phosphoryl)serine. The segment covering 1728–1752 (DSIETSSYPTPDESTTTTITSPSGS) has biased composition (low complexity). The tract at residues 1728-1760 (DSIETSSYPTPDESTTTTITSPSGSDRNVGRNS) is disordered. One can recognise a Carrier 2 domain in the interval 1763-1840 (DGVGTTVGLV…AITAALHAIF (78 aa)). O-(pantetheine 4'-phosphoryl)serine is present on Ser-1800. Residues 1872 to 1976 (TLFLFPDGSG…ILIDSPNPMG (105 aa)) form a TE/CLC (thioesterase/Claisen cyclase) domain region.

Pantetheine 4'-phosphate serves as cofactor.

Its function is as follows. Non-reducing polyketide synthase; part of the gene cluster that mediates the biosynthesis of a methylated derivative of known natural products orthosporin and diaporthin. AoiG catalyzes the biosynthesis of the hexaketide isocoumarin scaffold, via condensation of one acetyl-CoA starter unit with 6 malonyl-CoA units. An oxidoreductase that has still to be identified catalyzes the stereospecific reduction of the carbonyl moiety of the hexaketide isocoumarin scaffold to generate the S-configured secondary alcohol at C-11 of orthosporin. The methyltrasferase aoiF then catalyzes the biotransformation of not only orthosporin to diaporthin but also diaporthin to the final product, by performing a tandem methylation of the polyketide core. This is Non-reducing polyketide synthase aoiG from Aspergillus oryzae (strain ATCC 42149 / RIB 40) (Yellow koji mold).